We begin with the raw amino-acid sequence, 587 residues long: Succinate dehydrogenase flavoprotein subunit (587 aa).

FAD contacts are provided by residues 15–20 (GAGGAG), 39–54 (SKVF…AQGG), and aspartate 223. Histidine 47 is modified (tele-8alpha-FAD histidine). Residues histidine 244 and threonine 256 each coordinate substrate. Arginine 288 (proton acceptor) is an active-site residue. Histidine 355 provides a ligand contact to substrate. Glutamate 389 lines the FAD pocket. Substrate is bound at residue arginine 400. Position 405–406 (405–406 (SL)) interacts with FAD.

It belongs to the FAD-dependent oxidoreductase 2 family. FRD/SDH subfamily. Part of an enzyme complex containing four subunits: a flavoprotein, an iron-sulfur protein, cytochrome b-556 and a hydrophobic protein. FAD is required as a cofactor.

The protein resides in the cell inner membrane. The catalysed reaction is a quinone + succinate = fumarate + a quinol. It functions in the pathway carbohydrate metabolism; tricarboxylic acid cycle; fumarate from succinate (bacterial route): step 1/1. This Coxiella burnetii (strain RSA 493 / Nine Mile phase I) protein is Succinate dehydrogenase flavoprotein subunit (sdhA).